The sequence spans 290 residues: Agmatinase (290 aa).

Residues histidine 112, aspartate 135, histidine 137, aspartate 139, aspartate 216, and aspartate 218 each coordinate Mn(2+).

Belongs to the arginase family. Agmatinase subfamily. The cofactor is Mn(2+).

The enzyme catalyses agmatine + H2O = urea + putrescine. It participates in amine and polyamine biosynthesis; putrescine biosynthesis via agmatine pathway; putrescine from agmatine: step 1/1. Its function is as follows. Catalyzes the formation of putrescine from agmatine. In Bacillus cereus (strain ATCC 14579 / DSM 31 / CCUG 7414 / JCM 2152 / NBRC 15305 / NCIMB 9373 / NCTC 2599 / NRRL B-3711), this protein is Agmatinase (speB).